Consider the following 265-residue polypeptide: Esterase claE (265 aa).

Residues S121, D211, and H239 each act as charge relay system in the active site.

This sequence belongs to the LovG family.

It participates in secondary metabolite biosynthesis. Its function is as follows. Esterase; part of the cla gene cluster that produces clavatol and ortho-quinone methide. The clavatol biosynthesis cluster cla and the terrestric acid cluster tra are both involved in the production of peniphenones and penilactones. The non-reducing PKS claF is responsible for the formation of clavatol from successive condensations of 3 malonyl-CoA units, presumably with a simple acetyl-CoA starter unit, and 2 methylation steps. The esterase claE probably collaborates with claF by catalyzing the hydrolysis of ACP-bound acyl intermediates to free the ACP from stalled intermediates. The clavatol oxidase claD then converts clavatol to hydroxyclavatol. Spontaneous dehydration of hydroxyclavatol leads to the accumulation of the highly active ortho-quinone methide. On the other hand, the PKS-NRPS hybrid traA is involved in the formation of crustosic acid, with the help of traB and traD. The polyketide synthase module (PKS) of traA is responsible for the synthesis of the polyketide backbone via the condensation of an acetyl-CoA starter unit with 3 malonyl-CoA units. The downstream nonribosomal peptide synthetase (NRPS) module then amidates the carboxyl end of the polyketide with L-malic acid. Because traA lacks a designated enoylreductase (ER) domain, the required activity is provided the enoyl reductase traG. Crustosic acid undergoes decarboxylation and isomerization to the terrestric acid, catalyzed by the 2-oxoglutarate-dependent dioxygenase traH. Both acids are further converted to the 2 gamma-butyrolactones (R)-5-methyltetronic acid and (S)-5-carboxylmethyltetronic acid, with involvement of the cytochrome P450 monooxygenase claJ. Spontaneous addition of the methide to these gamma-butyrolactones leads to peniphenone D and penilactone D, which undergo again stereospecific attacking by methide to give penilactones A and B. This is Esterase claE from Penicillium crustosum (Blue mold fungus).